Reading from the N-terminus, the 252-residue chain is tRNA pseudouridine synthase A (252 aa).

The Nucleophile role is filled by D51. Y105 contacts substrate.

This sequence belongs to the tRNA pseudouridine synthase TruA family.

The enzyme catalyses uridine(38/39/40) in tRNA = pseudouridine(38/39/40) in tRNA. Its function is as follows. Formation of pseudouridine at positions 38, 39 and 40 in the anticodon stem and loop of transfer RNAs. This Thermoplasma acidophilum (strain ATCC 25905 / DSM 1728 / JCM 9062 / NBRC 15155 / AMRC-C165) protein is tRNA pseudouridine synthase A.